The primary structure comprises 147 residues: Cytochrome c-type biogenesis protein CcmE (147 aa).

At 1–7 the chain is on the cytoplasmic side; that stretch reads MKPRHKR. A helical; Signal-anchor for type II membrane protein transmembrane segment spans residues 8–28; sequence AAIIAGGLAALGIAAYLVLNA. Residues 29–147 lie on the Periplasmic side of the membrane; the sequence is FQSNLVFFFS…QIQKTIKSLK (119 aa). The heme site is built by histidine 121 and tyrosine 125.

It belongs to the CcmE/CycJ family.

It localises to the cell inner membrane. Heme chaperone required for the biogenesis of c-type cytochromes. Transiently binds heme delivered by CcmC and transfers the heme to apo-cytochromes in a process facilitated by CcmF and CcmH. In Albidiferax ferrireducens (strain ATCC BAA-621 / DSM 15236 / T118) (Rhodoferax ferrireducens), this protein is Cytochrome c-type biogenesis protein CcmE.